The chain runs to 659 residues: Cysteine-rich receptor-like protein kinase 18 (659 aa).

An N-terminal signal peptide occupies residues 1-27; that stretch reads MATKSCELVLCFFVFFVISFSAISVSA. Gnk2-homologous domains are found at residues 28–131 and 137–250; these read QTCD…NRPF and MDPL…VYPF. At 28-287 the chain is on the extracellular side; the sequence is QTCDNTTGTF…KNDSRISGGK (260 aa). Residues Asn32, Asn57, Asn152, Asn162, Asn179, Asn180, Asn197, Asn275, and Asn279 are each glycosylated (N-linked (GlcNAc...) asparagine). A helical membrane pass occupies residues 288–308; that stretch reads IAAIVVVTVVTIILVVLGFVI. Residues 309-659 lie on the Cytoplasmic side of the membrane; it reads SNRRKQKQEM…EATITDVNPR (351 aa). The region spanning 339–611 is the Protein kinase domain; that stretch reads FSERNKLGKG…PTMSTIHQML (273 aa). Residues 345 to 353 and Lys367 contribute to the ATP site; that span reads LGKGGFGEV. At Tyr412 the chain carries Phosphotyrosine. Asp464 acts as the Proton acceptor in catalysis. Ser468 carries the post-translational modification Phosphoserine. Position 504 is a phosphothreonine (Thr504). A Phosphotyrosine modification is found at Tyr512.

The protein belongs to the protein kinase superfamily. Ser/Thr protein kinase family. CRK subfamily.

The protein localises to the membrane. It catalyses the reaction L-seryl-[protein] + ATP = O-phospho-L-seryl-[protein] + ADP + H(+). The enzyme catalyses L-threonyl-[protein] + ATP = O-phospho-L-threonyl-[protein] + ADP + H(+). The sequence is that of Cysteine-rich receptor-like protein kinase 18 (CRK18) from Arabidopsis thaliana (Mouse-ear cress).